The primary structure comprises 67 residues: Ferredoxin (67 aa).

4Fe-4S ferredoxin-type domains follow at residues 3 to 31 (WKVS…MNDE) and 36 to 67 (PKVE…IEEA). The [4Fe-4S] cluster site is built by C12, D15, and C18. C22 and C49 are oxidised to a cystine. C57 contributes to the [4Fe-4S] cluster binding site.

In terms of assembly, homodimer. [4Fe-4S] cluster serves as cofactor. The cofactor is [3Fe-4S] cluster.

Ferredoxins are iron-sulfur proteins that transfer electrons in a wide variety of metabolic reactions. The polypeptide is Ferredoxin (fdxA) (Pyrococcus furiosus (strain ATCC 43587 / DSM 3638 / JCM 8422 / Vc1)).